The following is a 579-amino-acid chain: uncharacterized protein (579 aa).

This is an uncharacterized protein from Klebsiella pneumoniae.